Consider the following 366-residue polypeptide: Cobalt-precorrin-5B C(1)-methyltransferase (366 aa).

The protein belongs to the CbiD family.

The enzyme catalyses Co-precorrin-5B + S-adenosyl-L-methionine = Co-precorrin-6A + S-adenosyl-L-homocysteine. Its pathway is cofactor biosynthesis; adenosylcobalamin biosynthesis; cob(II)yrinate a,c-diamide from sirohydrochlorin (anaerobic route): step 6/10. Its function is as follows. Catalyzes the methylation of C-1 in cobalt-precorrin-5B to form cobalt-precorrin-6A. The sequence is that of Cobalt-precorrin-5B C(1)-methyltransferase from Methanococcus maripaludis (strain C7 / ATCC BAA-1331).